A 117-amino-acid polypeptide reads, in one-letter code: Holo-[acyl-carrier-protein] synthase (117 aa).

Residues D8 and E58 each coordinate Mg(2+).

This sequence belongs to the P-Pant transferase superfamily. AcpS family. Requires Mg(2+) as cofactor.

The protein localises to the cytoplasm. It carries out the reaction apo-[ACP] + CoA = holo-[ACP] + adenosine 3',5'-bisphosphate + H(+). In terms of biological role, transfers the 4'-phosphopantetheine moiety from coenzyme A to a Ser of acyl-carrier-protein. The chain is Holo-[acyl-carrier-protein] synthase from Enterococcus faecalis (strain ATCC 700802 / V583).